The primary structure comprises 661 residues: Junctophilin-1 (661 aa).

At 1 to 639 (MTGGRFDFDD…EKEANSGPNS (639 aa)) the chain is on the cytoplasmic side. MORN repeat units follow at residues 14–36 (YCGGWEEGKAHGHGICTGPKGQG), 38–59 (YSGSWSHGFEVVGGYTWPSGNT), 60–82 (YQGYWAQGKRHGLGVETKGKWMY), 106–128 (YEGTWSNGLQDGYGVETYGDGGT), and 129–151 (YQGQWAGGMRHGYGVRQSVPYGM). Phosphoserine is present on residues Ser-157, Ser-216, and Ser-220. A disordered region spans residues 228 to 247 (SKSSISSKRSSVRSDAAMSR). MORN repeat units lie at residues 281 to 303 (YMGEWKNDKRNGFGVSERSNGMK) and 304 to 326 (YEGEWANNKRHGYGCTVFPDGSK). Residues 433–454 (DAKENPEEKVPEKPPTPKESPH) show a composition bias toward basic and acidic residues. Positions 433–631 (DAKENPEEKV…SNDSCPALEK (199 aa)) are disordered. Phosphothreonine is present on Thr-448. Ser-452 bears the Phosphoserine mark. Position 461 is a phosphothreonine (Thr-461). Phosphoserine is present on residues Ser-465, Ser-469, and Ser-475. Basic and acidic residues predominate over residues 599–613 (VAKESKAEPKAKKSE). A helical; Anchor for type IV membrane protein transmembrane segment spans residues 640–660 (IMIVLVMLLNIGLAILFVHFL).

This sequence belongs to the junctophilin family. Abundantly expressed in skeletal muscle. Very low levels in heart.

It localises to the cell membrane. The protein resides in the endoplasmic reticulum membrane. Its subcellular location is the sarcoplasmic reticulum membrane. Its function is as follows. Junctophilins contribute to the formation of junctional membrane complexes (JMCs) which link the plasma membrane with the endoplasmic or sarcoplasmic reticulum in excitable cells. Provides a structural foundation for functional cross-talk between the cell surface and intracellular calcium release channels. JPH1 contributes to the construction of the skeletal muscle triad by linking the t-tubule (transverse-tubule) and SR (sarcoplasmic reticulum) membranes. This is Junctophilin-1 (JPH1) from Homo sapiens (Human).